We begin with the raw amino-acid sequence, 206 residues long: Protein MIS12 homolog (206 aa).

The stretch at 102–206 forms a coiled coil; the sequence is DKCQETNPFS…EKESRRLETQ (105 aa).

This sequence belongs to the mis12 family. In terms of assembly, component of the MIS12 complex composed of MIS12, DSN1, NSL1 and PMF1. Also interacts with KNL1, CBX3, CBX5, NDC80 and ZWINT.

It localises to the chromosome. Its subcellular location is the centromere. The protein localises to the kinetochore. Functionally, part of the MIS12 complex which is required for normal chromosome alignment and segregation and for kinetochore formation during mitosis. Essential for proper kinetochore microtubule attachments. This is Protein MIS12 homolog from Mus musculus (Mouse).